The following is a 2635-amino-acid chain: Large tegument protein deneddylase (2635 aa).

The interval 1-233 (MAAQPLYMEG…LHGPRMDISR (233 aa)) is deubiquitination activity. The Peptidase C76 domain maps to 9-223 (EGMASTHQAN…NHYRTIVFEE (215 aa)). Residues cysteine 29, aspartate 159, and histidine 161 contribute to the active site. 4 disordered regions span residues 243–497 (ITSP…DRYA), 2238–2269 (PLTI…QQPK), 2357–2438 (RTAL…KRAA), and 2500–2533 (KAGW…DDKS). Residues 245-255 (SPSVSPAPSEA) show a composition bias toward low complexity. 2 stretches are compositionally biased toward basic and acidic residues: residues 256–270 (PLRR…ETRP) and 282–295 (PTDR…DRPP). An interaction with inner tegument protein region spans residues 316-325 (KTGRGGNEGR). Over residues 330–346 (PPDEHQPPHITAEHMDQ) the composition is skewed to basic and acidic residues. The segment covering 448-461 (DDPLTPLYPLTDTP) has biased composition (low complexity). Over residues 2379 to 2402 (TLTFRLPPTAPTPATAALETKTTP) the composition is skewed to low complexity. Basic and acidic residues predominate over residues 2425–2437 (HARDTSPPAEKRA).

It belongs to the herpesviridae large tegument protein family. In terms of assembly, interacts with host CUL1 and CUL4A; these interactions inhibit the E3 ligase activity of cullins. Interacts with inner tegument protein. Interacts with capsid vertex specific component CVC2. Interacts with the major capsid protein/MCP.

Its subcellular location is the virion tegument. It localises to the host cytoplasm. The protein localises to the host nucleus. It carries out the reaction Thiol-dependent hydrolysis of ester, thioester, amide, peptide and isopeptide bonds formed by the C-terminal Gly of ubiquitin (a 76-residue protein attached to proteins as an intracellular targeting signal).. Its function is as follows. Large tegument protein that plays multiple roles in the viral cycle. During viral entry, remains associated with the capsid while most of the tegument is detached and participates in the capsid transport toward the host nucleus. Plays a role in the routing of the capsid at the nuclear pore complex and subsequent uncoating. Within the host nucleus, acts as a deneddylase and promotes the degradation of nuclear CRLs (cullin-RING ubiquitin ligases) and thereby stabilizes nuclear CRL substrates, while cytoplasmic CRLs remain unaffected. These modifications prevent host cell cycle S-phase progression and create a favorable environment allowing efficient viral genome replication. Participates later in the secondary envelopment of capsids. Indeed, plays a linker role for the association of the outer viral tegument to the capsids together with the inner tegument protein. The chain is Large tegument protein deneddylase from Homo sapiens (Human).